The chain runs to 595 residues: CDPK-related kinase 3 (595 aa).

The segment at 1 to 131 (MGQCYGKVNQ…GTEPEQSLDK (131 aa)) is disordered. Glycine 2 carries the N-myristoyl glycine lipid modification. The segment covering 20-37 (NTTTYVVSGDGNQIQPLT) has biased composition (polar residues). Positions 111-124 (KPKEGPIPEERGTE) are enriched in basic and acidic residues. One can recognise a Protein kinase domain in the interval 143-405 (YELGKEVGRG…AVQALTHPWL (263 aa)). ATP contacts are provided by residues 149-157 (VGRGHFGHT) and lysine 175. Aspartate 271 functions as the Proton acceptor in the catalytic mechanism. Phosphoserine is present on serine 311. At serine 353 the chain carries Phosphoserine; by CPK1 and CPK34. An autoinhibitory domain region spans residues 409–439 (SRVIPLDILIYKLVKAYLHATPLRRAALKAL). The tract at residues 428–448 (ATPLRRAALKALAKALTENEL) is calmodulin binding (CaMBD). EF-hand domains lie at 446–482 (NELVYLRAQFMLLGPNKDGSVSLENFKTALMQNATDA), 483–518 (MRESRVPEILHTMESLAYRKMYFEEFCAAAISIHQL), 519–558 (EAVDAWEEIATAGFQHFETEGNRVITIEELARELNVGASA), and 559–588 (YGHLRDWVRSSDGKLSYLGFTKFLHGVTLR). Ca(2+) contacts are provided by asparagine 461, aspartate 463, serine 465, lysine 502, glutamate 507, asparagine 540, glutamate 547, serine 568, aspartate 570, and lysine 572. Serine 574 is subject to Phosphoserine.

This sequence belongs to the protein kinase superfamily. Ser/Thr protein kinase family. CDPK subfamily. In terms of assembly, binds calmodulin (CaM) in a calcium-dependent manner. Interacts with GLN1-1. Autophosphorylated. In terms of tissue distribution, ubiquitously expressed with higher levels in siliques and roots, especially at the root cap. Particularly present in vascular bundles of stems and leaves.

It is found in the cytoplasm. The protein localises to the membrane. It carries out the reaction L-seryl-[protein] + ATP = O-phospho-L-seryl-[protein] + ADP + H(+). The catalysed reaction is L-threonyl-[protein] + ATP = O-phospho-L-threonyl-[protein] + ADP + H(+). Its activity is regulated as follows. Not activated by calcium. Autophosphorylation may play an important role in the regulation of the kinase activity. Stimulated by magnesium ions (optimum at 10-15 mM) and manganese ions. In terms of biological role, may play a role in signal transduction pathways that involve calcium as a second messenger. Serine/threonine kinase that phosphorylates histone H3 an GLN1-1. This Arabidopsis thaliana (Mouse-ear cress) protein is CDPK-related kinase 3 (CRK3).